Consider the following 1308-residue polypeptide: Chromosome partition protein Smc (1308 aa).

Residue 34 to 41 (PNGCGKSN) coordinates ATP. Residues 115-181 (AAREASMEEV…VAEGQPSDAQ (67 aa)) are disordered. Over residues 137 to 169 (TEAEATEQQAAPSEGAAPTTEATAPSTENEAAP) the composition is skewed to low complexity. The stretch at 278 to 600 (ITKYKTKKRL…DTLRAEYATL (323 aa)) forms a coiled coil. One can recognise an SMC hinge domain in the interval 637 to 757 (AGVLADFLEV…VPDPAIGREL (121 aa)). Coiled-coil stretches lie at residues 791–1046 (SLKR…ELHA) and 1110–1148 (MALEEYKETAQRHEFLETQRKDLLDSIENTQNTIKEIDQ).

It belongs to the SMC family. In terms of assembly, homodimer.

The protein resides in the cytoplasm. Functionally, required for chromosome condensation and partitioning. This chain is Chromosome partition protein Smc, found in Koribacter versatilis (strain Ellin345).